The sequence spans 895 residues: Iron-regulated surface determinant protein H (895 aa).

An N-terminal signal peptide occupies residues 1-40 (MNKHHPKLRSFYSIRKSILGVASVIVSTLFLITSQHQAQA). Residues 42–84 (ENTNTSDKISENQNNNATTTQPPKDTNQTQPATQPANTAKTYP) are disordered. Positions 53–62 (NQNNNATTTQ) are enriched in low complexity. Residues 63–81 (PPKDTNQTQPATQPANTAK) are compositionally biased toward polar residues. In terms of domain architecture, NEAT 1 spans 105–232 (DIGPREQVNF…IYNDPSLVKS (128 aa)). A disordered region spans residues 239–324 (VTNDQSSSDA…NQSDVNQQYP (86 aa)). Low complexity predominate over residues 240–276 (TNDQSSSDASNQTNTNTSNQNTSTINNANNQPQATTN). The span at 277–323 (MSQPAQPKSSANADQASSQPAHETNSNGNTNDKTNESSNQSDVNQQY) shows a compositional bias: polar residues. NEAT domains are found at residues 345 to 471 (TADN…DYVD) and 543 to 660 (QLTD…TKDD). Disordered stretches follow at residues 657 to 705 (TKDD…KADV), 752 to 782 (IAKD…DSNK), and 841 to 868 (KTKE…GETT). 2 stretches are compositionally biased toward polar residues: residues 663–677 (SQNN…QTGQ) and 687–697 (AENSSTATNPK). 2 stretches are compositionally biased toward basic and acidic residues: residues 752–764 (IAKD…DKGA) and 841–854 (KTKE…KENK). Residues 855–868 (LSQSKMLPKTGETT) show a composition bias toward polar residues. An LPXTG sorting signal motif is present at residues 861-865 (LPKTG). Pentaglycyl murein peptidoglycan amidated threonine is present on Thr864. Positions 865-895 (GETTSSQSWWGLYALLGMLALFIPKFRKESK) are cleaved as a propeptide — removed by sortase.

Belongs to the IsdH family.

Its subcellular location is the secreted. It is found in the cell wall. Functionally, binds human plasma haptoglobin-hemoglobin complexes, haptoglobin and hemoglobin. Binds haptoglobin-hemoglobin complexes with significantly higher affinity than haptoglobin alone. This chain is Iron-regulated surface determinant protein H (isdH), found in Staphylococcus aureus (strain MSSA476).